The chain runs to 331 residues: Gamma-parvin (331 aa).

At methionine 1 the chain carries N-acetylmethionine. The segment at 17 to 39 (EPPAEEELSKGGKKKYLPPTSRK) is disordered. Calponin-homology (CH) domains are found at residues 44–151 (EELQ…KRFQ) and 210–317 (NAVK…CKHT).

This sequence belongs to the parvin family. In terms of assembly, interacts with ILK; the interaction promotes the establishment of cell polarity required for leukocyte migration. Interacts with ARHGEF6; the guanine nucleotide exchange factor activity of ARHGEF6 is essential for the PARVG-induced enhancement of cell spreading. As to expression, expressed predominantly in lymphoid organs, including spleen, thymus, lymph node, bone marrow and peripheral blood leukocytes and moderately in the digestive tract, including stomach, duodenum, jejunum, ileum, ileocecum and appendix, as well as in lung and liver. Also expressed in tumors, but at a lower level than in the corresponding normal tissues.

It is found in the cell junction. Its subcellular location is the focal adhesion. It localises to the cell membrane. The protein resides in the cytoplasm. The protein localises to the cytoskeleton. Plays a role with ILK in promoting the cell adhesion and spreading of leukocytes. The polypeptide is Gamma-parvin (PARVG) (Homo sapiens (Human)).